The primary structure comprises 439 residues: Xylose isomerase (439 aa).

Catalysis depends on residues histidine 101 and aspartate 104. Residues glutamate 232, glutamate 268, histidine 271, aspartate 296, aspartate 307, aspartate 309, and aspartate 339 each contribute to the Mg(2+) site.

It belongs to the xylose isomerase family. In terms of assembly, homotetramer. The cofactor is Mg(2+).

Its subcellular location is the cytoplasm. The enzyme catalyses alpha-D-xylose = alpha-D-xylulofuranose. This chain is Xylose isomerase, found in Actinobacillus pleuropneumoniae serotype 5b (strain L20).